An 88-amino-acid polypeptide reads, in one-letter code: Small ribosomal subunit protein uS17 (88 aa).

The protein belongs to the universal ribosomal protein uS17 family. In terms of assembly, part of the 30S ribosomal subunit.

In terms of biological role, one of the primary rRNA binding proteins, it binds specifically to the 5'-end of 16S ribosomal RNA. This is Small ribosomal subunit protein uS17 from Nitrosospira multiformis (strain ATCC 25196 / NCIMB 11849 / C 71).